Here is a 1198-residue protein sequence, read N- to C-terminus: DNA polymerase II large subunit (1198 aa).

2 disordered regions span residues 281 to 332 and 534 to 553; these read YKTG…PQKK and HWAETDGAQQTRPPDGAAES. The span at 286–319 shows a compositional bias: acidic residues; the sequence is DTDEADADSDDGTDEDAADDSDIDDSSAGDEEAD.

It belongs to the archaeal DNA polymerase II family. In terms of assembly, heterodimer of a large subunit and a small subunit.

It catalyses the reaction DNA(n) + a 2'-deoxyribonucleoside 5'-triphosphate = DNA(n+1) + diphosphate. It carries out the reaction Exonucleolytic cleavage in the 3'- to 5'-direction to yield nucleoside 5'-phosphates.. In terms of biological role, possesses two activities: a DNA synthesis (polymerase) and an exonucleolytic activity that degrades single-stranded DNA in the 3'- to 5'-direction. Has a template-primer preference which is characteristic of a replicative DNA polymerase. This chain is DNA polymerase II large subunit, found in Natronomonas pharaonis (strain ATCC 35678 / DSM 2160 / CIP 103997 / JCM 8858 / NBRC 14720 / NCIMB 2260 / Gabara) (Halobacterium pharaonis).